Reading from the N-terminus, the 704-residue chain is MLRGRSLSVTSLGGLPVWEAERLPVEDLLLFEVSWEVTNKVGGICTVIQTKAKTTADEWGENYFLIGPYFEHNMKTQVEQCEPTNDAVRKAVDAMNKHGCQVHFGRWLIEGSPYVVLFDISSSAWNLDRWKGDFWEACGVGIPHHDREANDMLIFGSLTAWFLKEVTDHADGKHVIAQFHEWQAGTGLILSRARKLPIATVFTTHATLLGRYLCAANIDFYNQLDKFDIDKEAGERQIYHRYCMERASVHCAHVFTTVSEITAIEAEHMLKRKPDVVTPNGLNVKKFSAVHEFQNLHAMYKARIQDFVRGHFYGHLDFDLEKTLFLFIAGRYEFSNKGADIFLESLSRLNFLLRMHKSNVTVVVFFIMPAKTNNFNVETLKGQAVRKQLWDTVHCLKEKFGKKLYDGLLRGEIPDMNSILDRDDLTIMKRAIFSTQRQSLPPVTTHNMIDDSTDPILSTIRRIGLFNNRADRVKVILHPEFLSSTSPLLPMDYEEFVRGCHLGVFPSYYEPWGYTPAECTVMGIPSVTTNLSGFGCFVQEHVADPTAYGIYIVDRRFRSPDDSCNQLTQFLYGFCKQSRRQRIIQRNRTERLSDLLDWRYLGRYYQHARHLTLSRAFPDKFHLEPTSPPTTDGFKYPRPSSVPPSPSGSQASSPQCSDAEDEEDEDERYDEEEEAERDRLNIKSPFSLNHFPKGKKKLHGEYKN.

Serine 8 carries the phosphoserine; by AMPK and PKA modification. At serine 11 the chain carries Phosphoserine. Lysine 40 lines the UDP pocket. UDP-alpha-D-glucose contacts are provided by histidine 205 and arginine 211. Positions 291, 292, 294, 297, and 301 each coordinate alpha-D-glucose 6-phosphate. Arginine 331 is a UDP binding site. Arginine 331 contacts UDP-alpha-D-glucose. Histidine 501 is a binding site for alpha-D-glucose 6-phosphate. 3 residues coordinate UDP-alpha-D-glucose: glutamate 510, tryptophan 512, and glycine 513. Threonine 515 contacts UDP. 2 residues coordinate alpha-D-glucose 6-phosphate: arginine 582 and arginine 586. The tract at residues 620 to 704 (KFHLEPTSPP…KKKLHGEYKN (85 aa)) is disordered. The residue at position 627 (serine 627) is a Phosphoserine. Serine 641, serine 645, serine 649, and serine 653 each carry phosphoserine; by GSK3-alpha and GSK3-beta. Low complexity predominate over residues 647–657 (SGSQASSPQCS). Residue serine 657 is modified to Phosphoserine; by CK2. Acidic residues predominate over residues 658 to 675 (DAEDEEDEDERYDEEEEA). A Phosphoserine modification is found at serine 684.

It belongs to the glycosyltransferase 3 family. In terms of assembly, part of the glycogen synthase (GS)-glycogenin complex, a heterooctamer composed of a tetramer of GS and 2 dimers of glycogenin, where each GS protomer binds to one glycogenin subunit (via glycogenin C-terminus); the GS tetramer may dissociate from glycogenin dimers to continue glycogen polymerization on its own. May also form a heterooctamer complex with GYG1 (via GYG1 C-terminus). Phosphorylation reduces the activity towards UDP-alpha-D-glucose. Primed phosphorylation at Ser-657 (site 5) by CSNK2A1 and CSNK2A2 is required for inhibitory phosphorylation at Ser-641 (site 3a), Ser-645 (site 3b), Ser-649 (site 3c) and Ser-653 (site 4) by GSK3A an GSK3B. Dephosphorylation at Ser-641 and Ser-645 by PP1 activates the enzyme. Phosphorylation at Ser-8 is not required for interaction with GYG1. Interaction with GYG1 does not regulate the phosphorylation at Ser-8 and Ser-641. Specifically expressed in liver.

The enzyme catalyses [(1-&gt;4)-alpha-D-glucosyl](n) + UDP-alpha-D-glucose = [(1-&gt;4)-alpha-D-glucosyl](n+1) + UDP + H(+). Its pathway is glycan biosynthesis; glycogen biosynthesis. Its activity is regulated as follows. Allosteric activation by glucose-6-phosphate. Phosphorylation reduces the activity towards UDP-glucose. When in the non-phosphorylated state, glycogen synthase does not require glucose-6-phosphate as an allosteric activator; when phosphorylated it does. Glycogen synthase participates in the glycogen biosynthetic process along with glycogenin and glycogen branching enzyme. Extends the primer composed of a few glucose units formed by glycogenin by adding new glucose units to it. In this context, glycogen synthase transfers the glycosyl residue from UDP-Glc to the non-reducing end of alpha-1,4-glucan. This Mus musculus (Mouse) protein is Glycogen [starch] synthase, liver.